Consider the following 436-residue polypeptide: Protein 60A (436 aa).

The first 27 residues, 1–27 (MTASLVVLPSLWLILIIFTAPYTHCTQ), serve as a signal peptide directing secretion. Residues 28 to 317 (SGIYIDNGKD…STLHQRKKSK (290 aa)) constitute a propeptide that is removed on maturation. N-linked (GlcNAc...) asparagine glycosylation is found at N102, N114, N217, and N229. The disordered stretch occupies residues 293–322 (IKSTSGHSTQKRTKRSTLHQRKKSKSEPVN). A compositionally biased stretch (basic residues) spans 301 to 316 (TQKRTKRSTLHQRKKS). 3 disulfide bridges follow: C335-C401, C364-C433, and C368-C435. An N-linked (GlcNAc...) asparagine glycan is attached at N377.

It belongs to the TGF-beta family. In terms of assembly, homodimer; disulfide-linked.

It is found in the secreted. The sequence is that of Protein 60A (gbb) from Drosophila virilis (Fruit fly).